We begin with the raw amino-acid sequence, 140 residues long: Sex-regulated protein janus-B (140 aa).

A substrate-binding site is contributed by arginine 42. Catalysis depends on histidine 69, which acts as the Proton acceptor. 110 to 112 serves as a coordination point for substrate; the sequence is SRT.

This sequence belongs to the janus family. In terms of tissue distribution, germline cells of adult males.

Functionally, janA and janB regulate somatic sex differentiation. The protein is Sex-regulated protein janus-B (janB) of Drosophila melanogaster (Fruit fly).